A 163-amino-acid polypeptide reads, in one-letter code: Nucleotide-binding protein YPDSF_2805 (163 aa).

This sequence belongs to the YajQ family.

Functionally, nucleotide-binding protein. In Yersinia pestis (strain Pestoides F), this protein is Nucleotide-binding protein YPDSF_2805.